A 307-amino-acid polypeptide reads, in one-letter code: Stage III sporulation protein AA (307 aa).

143-150 contacts ATP; it reads GPPQTGKT.

In Bacillus subtilis (strain 168), this protein is Stage III sporulation protein AA (spoIIIAA).